Reading from the N-terminus, the 897-residue chain is Isoleucine--tRNA ligase (897 aa).

The 'HIGH' region signature appears at 59 to 69 (PYANGDIHVGH). E553 contributes to the L-isoleucyl-5'-AMP binding site. A 'KMSKS' region motif is present at residues 594–598 (KMSKS). Position 597 (K597) interacts with ATP. Positions 866, 869, 883, and 886 each coordinate Zn(2+).

The protein belongs to the class-I aminoacyl-tRNA synthetase family. IleS type 1 subfamily. Monomer. Requires Zn(2+) as cofactor.

It localises to the cytoplasm. It catalyses the reaction tRNA(Ile) + L-isoleucine + ATP = L-isoleucyl-tRNA(Ile) + AMP + diphosphate. In terms of biological role, catalyzes the attachment of isoleucine to tRNA(Ile). As IleRS can inadvertently accommodate and process structurally similar amino acids such as valine, to avoid such errors it has two additional distinct tRNA(Ile)-dependent editing activities. One activity is designated as 'pretransfer' editing and involves the hydrolysis of activated Val-AMP. The other activity is designated 'posttransfer' editing and involves deacylation of mischarged Val-tRNA(Ile). This chain is Isoleucine--tRNA ligase, found in Mycoplasmopsis synoviae (strain 53) (Mycoplasma synoviae).